Reading from the N-terminus, the 417-residue chain is 3-isopropylmalate dehydratase large subunit 2 (417 aa).

[4Fe-4S] cluster-binding residues include Cys298, Cys358, and Cys361.

This sequence belongs to the aconitase/IPM isomerase family. LeuC type 2 subfamily. In terms of assembly, heterodimer of LeuC and LeuD. Requires [4Fe-4S] cluster as cofactor.

It catalyses the reaction (2R,3S)-3-isopropylmalate = (2S)-2-isopropylmalate. It participates in amino-acid biosynthesis; L-leucine biosynthesis; L-leucine from 3-methyl-2-oxobutanoate: step 2/4. Functionally, catalyzes the isomerization between 2-isopropylmalate and 3-isopropylmalate, via the formation of 2-isopropylmaleate. This chain is 3-isopropylmalate dehydratase large subunit 2, found in Thermotoga maritima (strain ATCC 43589 / DSM 3109 / JCM 10099 / NBRC 100826 / MSB8).